A 1241-amino-acid chain; its full sequence is ATP-dependent helicase/nuclease subunit A (1241 aa).

Residues 12–485 form the UvrD-like helicase ATP-binding domain; it reads SQWTDDQWKA…IDLAKNFRSR (474 aa). An ATP-binding site is contributed by 33–40; the sequence is AAAGSGKT. Residues 505–805 enclose the UvrD-like helicase C-terminal domain; it reads GEIDYDADAE…RIMTIHKSKG (301 aa).

The protein belongs to the helicase family. AddA subfamily. In terms of assembly, heterodimer of AddA and AddB/RexB. It depends on Mg(2+) as a cofactor.

It catalyses the reaction Couples ATP hydrolysis with the unwinding of duplex DNA by translocating in the 3'-5' direction.. The catalysed reaction is ATP + H2O = ADP + phosphate + H(+). In terms of biological role, the heterodimer acts as both an ATP-dependent DNA helicase and an ATP-dependent, dual-direction single-stranded exonuclease. Recognizes the chi site generating a DNA molecule suitable for the initiation of homologous recombination. The AddA nuclease domain is required for chi fragment generation; this subunit has the helicase and 3' -&gt; 5' nuclease activities. The protein is ATP-dependent helicase/nuclease subunit A of Bacillus cereus (strain G9842).